A 216-amino-acid chain; its full sequence is UDP-N-acetylglucosamine transferase subunit ALG14 (216 aa).

Topologically, residues 1–3 are lumenal; that stretch reads MVC. The helical transmembrane segment at 4–24 threads the bilayer; the sequence is VLTLAASAGGLAVLLIVRLWA. Residues 25–216 are Cytoplasmic-facing; that stretch reads VLRSHPVTPR…PKSVYLGRIV (192 aa).

The protein belongs to the ALG14 family. In terms of assembly, forms with ALG13 the active heterodimeric UDP-N-acetylglucosamine transferase complex.

Its subcellular location is the endoplasmic reticulum membrane. Functionally, part of the UDP-N-acetylglucosamine transferase complex that operates in the biosynthetic pathway of dolichol-linked oligosaccharides, the glycan precursors employed in protein asparagine (N)-glycosylation. The assembly of dolichol-linked oligosaccharides begins on the cytosolic side of the endoplasmic reticulum membrane and finishes in its lumen. The sequential addition of sugars to dolichol pyrophosphate produces dolichol-linked oligosaccharides containing fourteen sugars, including two GlcNAcs, nine mannoses and three glucoses. Once assembled, the oligosaccharides are transferred from the lipid to nascent proteins by oligosaccharyltransferases. Functions as a protein-membrane adapter recruiting ALG13 at the cytoplasmic face of the endoplasmic reticulum, where the complex catalyzes the second step of dolichol pyrophosphate biosynthesis, transferring a beta1,4-linked N-acetylglucosamine (GlcNAc) from UDP-GlcNAc to GlcNAc-pyrophosphatedolichol (Gn-PDol) to produce N,N'-diacetylchitobiosyl diphosphodolichol. N,N'-diacetylchitobiosyl diphosphodolichol is a substrate for ALG1, the following enzyme in the biosynthetic pathway. This Rattus norvegicus (Rat) protein is UDP-N-acetylglucosamine transferase subunit ALG14.